The chain runs to 195 residues: Imidazoleglycerol-phosphate dehydratase (195 aa).

The protein belongs to the imidazoleglycerol-phosphate dehydratase family.

It localises to the cytoplasm. It catalyses the reaction D-erythro-1-(imidazol-4-yl)glycerol 3-phosphate = 3-(imidazol-4-yl)-2-oxopropyl phosphate + H2O. It participates in amino-acid biosynthesis; L-histidine biosynthesis; L-histidine from 5-phospho-alpha-D-ribose 1-diphosphate: step 6/9. The polypeptide is Imidazoleglycerol-phosphate dehydratase (Dinoroseobacter shibae (strain DSM 16493 / NCIMB 14021 / DFL 12)).